The sequence spans 714 residues: Delta-like protein 1 (714 aa).

The first 17 residues, 1–17 (MGRRSALALAVVSALLC), serve as a signal peptide directing secretion. Residues 18 to 537 (QVWSSGVFEL…VAAQGGSFPW (520 aa)) are Extracellular-facing. Positions 176-220 (FVCDEHYYGEGCSVFCRPRDDAFGHFTCGERGEKMCDPGWKGQYC) constitute a DSL domain. 27 cysteine pairs are disulfide-bonded: C178–C187, C191–C203, C211–C220, C225–C236, C229–C242, C244–C253, C256–C267, C262–C273, C275–C284, C291–C303, C297–C313, C315–C324, C331–C342, C336–C351, C353–C362, C369–C380, C374–C390, C392–C401, C408–C419, C413–C428, C430–C439, C446–C457, C451–C466, C468–C477, C484–C495, C489–C504, and C506–C515. EGF-like domains lie at 225-253 (CLPG…GRYC), 256-284 (CIRY…GLFC), and 291-324 (CTHH…GANC). One can recognise an EGF-like 4; calcium-binding domain in the interval 331–362 (CAPSPCRNGGSCTDLEDSYSCTCPPGFYGKVC). 2 EGF-like domains span residues 369-401 (CADG…GFNC) and 408-439 (CSSS…GRYC). The EGF-like 7; calcium-binding domain occupies 446 to 477 (CASSPCANGGTCRDSVNDFSCTCPPGYTGRNC). N-linked (GlcNAc...) asparagine glycosylation occurs at N476. Positions 484–515 (CEHAPCHNGATCHQRGQRYMCECAQGYGGANC) constitute an EGF-like 8 domain. The chain crosses the membrane as a helical span at residues 538–560 (VAVCAGVVLVLLLLLGCAAVVVC). Over 561 to 714 (VRLKLQKHQP…KDECVIATEV (154 aa)) the chain is Cytoplasmic. K605 participates in a covalent cross-link: Glycyl lysine isopeptide (Lys-Gly) (interchain with G-Cter in ubiquitin). Phosphothreonine is present on T630. The span at 644–656 (ATVRDAHSKRDTK) shows a compositional bias: basic and acidic residues. The disordered stretch occupies residues 644–690 (ATVRDAHSKRDTKCQSQGSVGEEKSTSTLRGGEVPDRKRPESVYSTS). Phosphoserine; by PKB is present on S685. Position 688 is a phosphoserine (S688). Residues 711-714 (ATEV) form an interaction with MAGI1 region.

In terms of assembly, homodimer. Interacts with TJP1. Interacts with MAGI1 (via PDZ domain); forms a complex with CTNNB1 and CDH2 and promotes recruitment to the adherens junction and stabilization on the cell surface. Interacts with PSEN1; undergoes a presenilin-dependent gamma-secretase cleavage that releases a Dll1-intracellular form. Interacts with MFAP5. Interacts with MIB1. Interacts with NEURL1B; leads to ubiquitination. Interacts with NEURL1. Interacts with SYNJ2BP; enhances DLL1 protein stability, and promotes Notch signaling in endothelial cells. Interacts with MAGI1, MAGI2, MAGI3 and MPDZ. Interacts (via ubiquitin) with EPN1 (via IUM domain); binding with NOTCH1 attached to neighboring cell, promotes ligand ubiquitination and EPN1 interaction, leading to NECD transendocytosis and Notch signaling. Interacts with NOTCH1. In terms of processing, ubiquitinated by MIB (MIB1 or MIB2), leading to its endocytosis and subsequent degradation. Ubiquitinated; promotes recycling back to the plasma membrane and confers a strong affinity for NOTCH1. Mono- and multi-ubiquitinated. Multi-ubiquitination of Lys-605 by MIB1 promotes both cis and trans-interaction with NOTCH1, as well as activation of Notch signaling. Ubiquitinated by NEURL1B. Post-translationally, phosphorylated in a membrane association-dependent manner. Phosphorylation at Ser-688 requires the presence of Ser-685, whereas phosphorylation at Thr-630 and Ser-685 occur independently of the other sites. Phosphorylation is required for full ligand activity in vitro and affects surface presentation, ectodomain shedding, and endocytosis. O-fucosylated. Can be elongated to a disaccharide by MFNG.

Its subcellular location is the apical cell membrane. It localises to the cell junction. It is found in the adherens junction. The protein localises to the membrane raft. Functionally, transmembrane ligand protein of NOTCH1, NOTCH2 and NOTCH3 receptors that binds the extracellular domain (ECD) of Notch receptor in a cis and trans fashion manner. Following transinteraction, ligand cells produce mechanical force that depends of a clathrin-mediated endocytosis, requiring ligand ubiquitination, EPN1 interaction, and actin polymerisation; these events promote Notch receptor extracellular domain (NECD) transendocytosis and triggers Notch signaling through induction of cleavage, hyperphosphorylation, and nuclear accumulation of the intracellular domain of Notch receptors (NICD). Is required for embryonic development and maintenance of adult stem cells in many different tissues and immune systeme; the DLL1-induced Notch signaling is mediated through an intercellular communication that regulates cell lineage, cell specification, cell patterning and morphogenesis through effects on differentiation and proliferation. Plays a role in brain development at different level, namely by regulating neuronal differentiation of neural precursor cells via cell-cell interaction, most likely through the lateral inhibitory system in an endogenous level dependent-manner. During neocortex development, Dll1-Notch signaling transmission is mediated by dynamic interactions between intermediate neurogenic progenitors and radial glia; the cell-cell interactions are mediated via dynamic and transient elongation processes, likely to reactivate/maintain Notch activity in neighboring progenitors, and coordinate progenitor cell division and differentiation across radial and zonal boundaries. During cerebellar development, regulates Bergmann glial monolayer formation and its morphological maturation through a Notch signaling pathway. At the retina and spinal cord level, regulates neurogenesis by preventing the premature differentiation of neural progenitors and also by maintaining progenitors in spinal cord through Notch signaling pathway. Also controls neurogenesis of the neural tube in a progenitor domain-specific fashion along the dorsoventral axis. Maintains quiescence of neural stem cells and plays a role as a fate determinant that segregates asymmetrically to one daughter cell during neural stem cells mitosis, resulting in neuronal differentiation in Dll1-inheriting cell. Plays a role in immune systeme development, namely the development of all T-cells and marginal zone (MZ) B cells. Blocks the differentiation of progenitor cells into the B-cell lineage while promoting the emergence of a population of cells with the characteristics of a T-cell/NK-cell precursor. Also plays a role during muscle development. During early development, inhibits myoblasts differentiation from the medial dermomyotomal lip and later regulates progenitor cell differentiation. Directly modulates cell adhesion and basal lamina formation in satellite cells through Notch signaling. Maintains myogenic progenitors pool by suppressing differentiation through down-regulation of MYOD1 and is required for satellite cell homing and PAX7 expression. During craniofacial and trunk myogenesis suppresses differentiation of cranial mesoderm-derived and somite-derived muscle via MYOD1 regulation but in cranial mesoderm-derived progenitors, is neither required for satellite cell homing nor for PAX7 expression. Also plays a role during pancreatic cell development. During type B pancreatic cell development, may be involved in the initiation of proximodistal patterning in the early pancreatic epithelium. Stimulates multipotent pancreatic progenitor cells proliferation and pancreatic growth by maintaining HES1 expression and PTF1A protein levels. During fetal stages of development, is required to maintain arterial identity and the responsiveness of arterial endothelial cells for VEGFA through regulation of KDR activation and NRP1 expression. Controls sprouting angiogenesis and subsequent vertical branch formation through regulation on tip cell differentiation. Negatively regulates goblet cell differentiation in intestine and controls secretory fat commitment through lateral inhibition in small intestine. Plays a role during inner ear development; negatively regulates auditory hair cell differentiation. Plays a role during nephron development through Notch signaling pathway. Regulates growth, blood pressure and energy homeostasis. The protein is Delta-like protein 1 (Dll1) of Rattus norvegicus (Rat).